The primary structure comprises 299 residues: Mycothiol acetyltransferase (299 aa).

2 N-acetyltransferase domains span residues 1–156 and 149–299; these read MGWT…TYRG and VTMR…ARAL. Glu-33 serves as a coordination point for 1D-myo-inositol 2-(L-cysteinylamino)-2-deoxy-alpha-D-glucopyranoside. Residues 75–77 and 83–88 each bind acetyl-CoA; these read LVV and RRGIGT. 1D-myo-inositol 2-(L-cysteinylamino)-2-deoxy-alpha-D-glucopyranoside is bound by residues Glu-176, Lys-218, and Glu-231. Residues 235–237 and 242–248 contribute to the acetyl-CoA site; these read VGI and QGRGLGR. Tyr-269 is a binding site for 1D-myo-inositol 2-(L-cysteinylamino)-2-deoxy-alpha-D-glucopyranoside. 274 to 279 contacts acetyl-CoA; it reads NTAALH.

Belongs to the acetyltransferase family. MshD subfamily. As to quaternary structure, monomer.

It carries out the reaction 1D-myo-inositol 2-(L-cysteinylamino)-2-deoxy-alpha-D-glucopyranoside + acetyl-CoA = mycothiol + CoA + H(+). Its function is as follows. Catalyzes the transfer of acetyl from acetyl-CoA to desacetylmycothiol (Cys-GlcN-Ins) to form mycothiol. The protein is Mycothiol acetyltransferase of Rhodococcus erythropolis (strain PR4 / NBRC 100887).